The sequence spans 519 residues: Lysine 5,6-aminomutase alpha subunit (519 aa).

Aspartate 57 to valine 59 serves as a coordination point for adenosylcob(III)alamin. Residues arginine 187 to serine 192, serine 241, tyrosine 266, arginine 271, and asparagine 302 each bind pyridoxal 5'-phosphate.

This sequence belongs to the KamD family. In terms of assembly, heterotetramer of 2 alpha and 2 beta subunits. It depends on adenosylcob(III)alamin as a cofactor. Pyridoxal 5'-phosphate is required as a cofactor.

It catalyses the reaction (3S)-3,6-diaminohexanoate = (3S,5S)-3,5-diaminohexanoate. It carries out the reaction D-lysine = (2R,5S)-2,5-diaminohexanoate. It participates in amino-acid metabolism; lysine degradation. With respect to regulation, rapidly inactivated in the presence of D-lysine and to a lesser extent in the absence of adenosylcobalamin (Adocbl). Activity is stable in the presence of Adocbl when D-lysine is absent. Adocbl imparts thermal stability at 37 degrees Celsius. Functionally, catalyzes the migration of the L-beta-lysine and D-lysine epsilon amino group to the delta carbon to produce 3,5-diaminohexanoate and 2,5-diaminohexanoate, respectively. This chain is Lysine 5,6-aminomutase alpha subunit (kamD), found in Acetoanaerobium sticklandii (strain ATCC 12662 / DSM 519 / JCM 1433 / CCUG 9281 / NCIMB 10654 / HF) (Clostridium sticklandii).